The sequence spans 212 residues: Large ribosomal subunit protein uL3 (212 aa).

The protein belongs to the universal ribosomal protein uL3 family. In terms of assembly, part of the 50S ribosomal subunit. Forms a cluster with proteins L14 and L19.

In terms of biological role, one of the primary rRNA binding proteins, it binds directly near the 3'-end of the 23S rRNA, where it nucleates assembly of the 50S subunit. This Acetivibrio thermocellus (strain ATCC 27405 / DSM 1237 / JCM 9322 / NBRC 103400 / NCIMB 10682 / NRRL B-4536 / VPI 7372) (Clostridium thermocellum) protein is Large ribosomal subunit protein uL3.